Consider the following 265-residue polypeptide: L-histidine 2-aminobutanoyltransferase (265 aa).

Belongs to the methyltransferase superfamily. CntL family.

The catalysed reaction is L-histidine + S-adenosyl-L-methionine = (2S)-2-amino-4-{[(1S)-1-carboxy-2-(1H-imidazol-4-yl)ethyl]amino}butanoate + S-methyl-5'-thioadenosine + H(+). Functionally, catalyzes the nucleophilic attack of one alpha-aminobutanoate moiety from SAM onto L-histidine to produce the intermediate (2S)-2-amino-4-{[(1S)-1-carboxy-2-(1H-imidazol-4-yl)ethyl]amino}butanoate. Functions in the biosynthesis of the metallophore yersinopine, which is involved in metal acquisition and thus enables bacterial growth inside the host, where metal access is limited. Therefore, this enzyme probably contributes to Yersinia virulence. This chain is L-histidine 2-aminobutanoyltransferase, found in Yersinia pestis.